The primary structure comprises 708 residues: Glycogen [starch] synthase isoform 1 (708 aa).

R20 contributes to the UDP binding site. S159 carries the post-translational modification Phosphoserine. UDP-alpha-D-glucose-binding residues include H193 and R199. Alpha-D-glucose 6-phosphate-binding residues include H280, E281, Q283, H286, and K290. A UDP-binding site is contributed by R320. R320 contacts UDP-alpha-D-glucose. S363 is modified (phosphoserine). H500 contributes to the alpha-D-glucose 6-phosphate binding site. UDP-alpha-D-glucose-binding residues include E509, W511, and G512. T514 lines the UDP pocket. Phosphoserine is present on S560. Residues R583 and R587 each coordinate alpha-D-glucose 6-phosphate. A phosphoserine mark is found at S651 and S655. 2 positions are modified to phosphoserine; by PKA: S660 and S662. A disordered region spans residues 687–708; the sequence is STNGAIDNDDDDNDTSAYYEDN. A compositionally biased stretch (acidic residues) spans 693–708; sequence DNDDDDNDTSAYYEDN.

Belongs to the glycosyltransferase 3 family.

It catalyses the reaction [(1-&gt;4)-alpha-D-glucosyl](n) + UDP-alpha-D-glucose = [(1-&gt;4)-alpha-D-glucosyl](n+1) + UDP + H(+). It functions in the pathway glycan biosynthesis; glycogen biosynthesis. With respect to regulation, allosteric activation by glucose-6-phosphate, and phosphorylation by a cAMP-dependent kinase. Glycogen synthase participates in the glycogen biosynthetic process along with glycogenin and glycogen branching enzyme. Extends the primer composed of a few glucose units formed by glycogenin by adding new glucose units to it. In this context, glycogen synthase transfers the glycosyl residue from UDP-Glc to the non-reducing end of alpha-1,4-glucan. In Saccharomyces cerevisiae (strain ATCC 204508 / S288c) (Baker's yeast), this protein is Glycogen [starch] synthase isoform 1 (GSY1).